The chain runs to 320 residues: Nod factor export ATP-binding protein I (320 aa).

The 231-residue stretch at 15 to 245 folds into the ABC transporter domain; sequence VSATGVWKKR…LGALKILEID (231 aa). ATP is bound at residue 47-54; the sequence is GTNGAGKS.

It belongs to the ABC transporter superfamily. Lipooligosaccharide exporter (TC 3.A.1.102) family. The complex is composed of two ATP-binding proteins (NodI) and two transmembrane proteins (NodJ).

It localises to the cell inner membrane. Functionally, part of the ABC transporter complex NodIJ involved in the export of the nodulation factors (Nod factors), the bacterial signal molecules that induce symbiosis and subsequent nodulation induction. Nod factors are LCO (lipo-chitin oligosaccharide), a modified beta-1,4-linked N-acetylglucosamine oligosaccharide. This subunit is responsible for energy coupling to the transport system. In Azorhizobium caulinodans (strain ATCC 43989 / DSM 5975 / JCM 20966 / LMG 6465 / NBRC 14845 / NCIMB 13405 / ORS 571), this protein is Nod factor export ATP-binding protein I.